The chain runs to 608 residues: DNA mismatch repair protein MutL (608 aa).

The interval alanine 363–valine 397 is disordered. The span at arginine 369 to proline 390 shows a compositional bias: basic and acidic residues.

The protein belongs to the DNA mismatch repair MutL/HexB family.

Its function is as follows. This protein is involved in the repair of mismatches in DNA. It is required for dam-dependent methyl-directed DNA mismatch repair. May act as a 'molecular matchmaker', a protein that promotes the formation of a stable complex between two or more DNA-binding proteins in an ATP-dependent manner without itself being part of a final effector complex. The chain is DNA mismatch repair protein MutL from Pelobacter propionicus (strain DSM 2379 / NBRC 103807 / OttBd1).